A 148-amino-acid chain; its full sequence is Small ribosomal subunit protein eS6 (148 aa).

Belongs to the eukaryotic ribosomal protein eS6 family.

The protein is Small ribosomal subunit protein eS6 of Pyrobaculum arsenaticum (strain DSM 13514 / JCM 11321 / PZ6).